The primary structure comprises 246 residues: UDP-N-acetyl-D-mannosaminuronic acid transferase (246 aa).

The protein belongs to the glycosyltransferase 26 family.

It catalyses the reaction UDP-N-acetyl-alpha-D-mannosaminouronate + N-acetyl-alpha-D-glucosaminyl-di-trans,octa-cis-undecaprenyl diphosphate = beta-D-ManNAcA-(1-&gt;4)-alpha-D-GlcNAc-di-trans,octa-cis-undecaprenyl diphosphate + UDP + H(+). It functions in the pathway bacterial outer membrane biogenesis; enterobacterial common antigen biosynthesis. Catalyzes the synthesis of Und-PP-GlcNAc-ManNAcA (Lipid II), the second lipid-linked intermediate involved in enterobacterial common antigen (ECA) synthesis. The polypeptide is UDP-N-acetyl-D-mannosaminuronic acid transferase (Escherichia coli O1:K1 / APEC).